A 411-amino-acid polypeptide reads, in one-letter code: Creatinase (411 aa).

The active site involves histidine 240.

This sequence belongs to the peptidase M24 family. Creatinase subfamily. Homodimer.

The enzyme catalyses creatine + H2O = sarcosine + urea. This is Creatinase from Bacillus sp. (strain B-0618).